Consider the following 139-residue polypeptide: Large ribosomal subunit protein mL42 (139 aa).

A mitochondrion-targeting transit peptide spans 1–32; that stretch reads MAVAAVKWVMSKRTILKHLFPVQNGALYCVCH.

The protein belongs to the mitochondrion-specific ribosomal protein mL42 family. As to quaternary structure, component of the mitochondrial ribosome large subunit (39S) which comprises a 16S rRNA and about 50 distinct proteins. Component of the mitochondrial ribosome small subunit (28S) which comprises a 12S rRNA and about 30 distinct proteins.

It localises to the mitochondrion. The polypeptide is Large ribosomal subunit protein mL42 (MRPL42) (Pongo abelii (Sumatran orangutan)).